The chain runs to 1027 residues: Presequence protease, mitochondrial (1027 aa).

The transit peptide at 1 to 22 (MIRQCWAGLRLCRALYQTSYRW) directs the protein to the mitochondrion. Residue histidine 98 participates in Zn(2+) binding. The Proton acceptor role is filled by glutamate 101. Residues histidine 102 and glutamate 199 each contribute to the Zn(2+) site. Cysteine 113 and cysteine 550 are disulfide-bonded. The segment at 803-827 (RKAIRPHVVEKSSNPSPSGSEISRT) is disordered. Over residues 814 to 825 (SSNPSPSGSEIS) the composition is skewed to low complexity.

The protein belongs to the peptidase M16 family. PreP subfamily. As to quaternary structure, monomer and homodimer; homodimerization is induced by binding of the substrate. Requires Zn(2+) as cofactor. In terms of processing, a disulfide bond locks the enzyme in the closed conformation preventing substrate entry into the catalytic chamber.

The protein localises to the mitochondrion matrix. Mainly exists in a closed and catalytically competent conformation but a closed-to-open switch allows substrate entry into the catalytic chamber. Substrate binding induces closure and dimerization. A disulfide bond may lock the enzyme in a closed conformation preventing substrate entry into the catalytic chamber, participating in redox regulation of the enzyme. Inhibited by metal-chelating agents. Inhibited by nickel and zinc excess, and slightly activated by manganese. Metalloendopeptidase of the mitochondrial matrix that functions in peptide cleavage and degradation rather than in protein processing. Has an ATP-independent activity. Specifically cleaves peptides in the range of 5 to 65 residues. Shows a preference for cleavage after small polar residues and before basic residues, but without any positional preference. Degrades the transit peptides of mitochondrial proteins after their cleavage. Also degrades other unstructured peptides. This chain is Presequence protease, mitochondrial (pitrm1), found in Xenopus laevis (African clawed frog).